The following is a 285-amino-acid chain: Steroidogenic acute regulatory protein, mitochondrial (285 aa).

The N-terminal 61 residues, 1–61, are a transit peptide targeting the mitochondrion; the sequence is MLPATFKLCA…RRSSLLSSPI (61 aa). In terms of domain architecture, START spans 65–278; that stretch reads TYSEADQCYV…LRDRMASGGG (214 aa).

As to quaternary structure, may interact with TSPO. As to expression, highly expressed in the testis and at lower levels in the ovary, kidney and head.

The protein resides in the mitochondrion. The catalysed reaction is cholesterol(in) = cholesterol(out). The protein operates within steroid metabolism; cholesterol metabolism. Its function is as follows. Plays a key role in steroid hormone synthesis by enhancing the metabolism of cholesterol into pregnenolone. Mediates the transfer of cholesterol from the outer mitochondrial membrane to the inner mitochondrial membrane where it is cleaved to pregnenolone. In Danio rerio (Zebrafish), this protein is Steroidogenic acute regulatory protein, mitochondrial (star).